An 863-amino-acid polypeptide reads, in one-letter code: MIVTMKAMEKRNKKLWTLYLAMALITPCLSLRQLYATVYAGVPVWEDATPVLFCASDANLTSTEKHNIWASQACVPTDPTPYEYPLHNVTDDFNIWKNYMVEQMQEDIISLWDQSLKPCVQMTFLCVQMECTNIAGTTNENLMKKCEFNVTTVIKDKKEKKQALFYVSDLMELNETSSTNKTNSKMYTLTNCNSTTITQACPKVSFEPIPIHYCAPAGYAIFKCNSTEFNGTGTCRNITVVTCTHGIRPTVSTQLILNGTLSKGKIRMMAKDILEGGKNIIVTLNSTLNMTCERPQIDIQEMRIGPMAWYSMGIGGTAGNSSRAAYCKYNATDWGKILKQTAERYLELVNNTGSINMTFNHSSGGDLEVTHLHFNCHGEFFYCNTAKMFNYTFSCNGTTCSVSNVSQGNNGTLPCKLRQVVRSWIRGQSGLYAPPIKGNLTCMSNITGMILQMDNTWNSSNNNVTFRPIGGDMKDIWRTELFNYKVVRVKPFSVAPTRIARPVISTRTHREKRAVGLGMLFLGVLSAAGSTMGAAATTLAVQTHTLLKGIVQQQDNLLRAIQAQQQLLRLSXWGIRQLRARLLALETLLQNQQLLSLWGCKGKLVCYTSVKWNRTWIGNESIWDTLTWQEWDRQISNISSTIYEEIQKAQVQQEQNEKKLLELDEWASIWNWLDITKWLWYIKIAIIIVGALVGVRVIMIVLNIVKNIRQGYQPLSLQIPNHHQEEAGTPGRTGGGGGEEGRPRWIPSPQGFLPLLYTDLRTIILWTYHLLSNLASGIQKVISYLRLGLWILGQKIINVCRICAAVTQYWLQELQNSATSLLDTLAVAVANWTDGIIAGIQRIGTGIRNIPRRIRQGLERSLL.

Positions 1–32 are cleaved as a signal peptide; the sequence is MIVTMKAMEKRNKKLWTLYLAMALITPCLSLR. Residues 33-684 are Extracellular-facing; the sequence is QLYATVYAGV…ITKWLWYIKI (652 aa). Cys-54 and Cys-74 form a disulfide bridge. 2 N-linked (GlcNAc...) asparagine; by host glycosylation sites follow: Asn-59 and Asn-88. Cystine bridges form between Cys-119–Cys-201, Cys-126–Cys-192, Cys-131–Cys-146, Cys-214–Cys-243, and Cys-224–Cys-235. The V1 stretch occupies residues 131 to 145; it reads CTNIAGTTNENLMKK. The V2 stretch occupies residues 146-192; the sequence is CEFNVTTVIKDKKEKKQALFYVSDLMELNETSSTNKTNSKMYTLTNC. Residues Asn-149, Asn-174, Asn-180, Asn-193, Asn-225, Asn-230, Asn-237, Asn-258, Asn-285, Asn-289, Asn-320, Asn-330, Asn-350, Asn-356, and Asn-360 are each glycosylated (N-linked (GlcNAc...) asparagine; by host). The tract at residues 292 to 326 is V3; that stretch reads CERPQIDIQEMRIGPMAWYSMGIGGTAGNSSRAAY. Cysteines 292 and 327 form a disulfide. The tract at residues 362–372 is CD4-binding loop; the sequence is SSGGDLEVTHL. Intrachain disulfides connect Cys-376-Cys-442 and Cys-383-Cys-415. Positions 383-415 are V4; the sequence is CNTAKMFNYTFSCNGTTCSVSNVSQGNNGTLPC. 8 N-linked (GlcNAc...) asparagine; by host glycosylation sites follow: Asn-390, Asn-396, Asn-404, Asn-410, Asn-439, Asn-445, Asn-458, and Asn-463. V5 regions lie at residues 458–469 and 460–469; these read NSSNNNVTFRPI and SNNNVTFRPI. A fusion peptide region spans residues 514–534; sequence AVGLGMLFLGVLSAAGSTMGA. The interval 576-594 is immunosuppression; sequence RQLRARLLALETLLQNQQL. Cys-600 and Cys-606 are disulfide-bonded. Asn-613, Asn-619, and Asn-637 each carry an N-linked (GlcNAc...) asparagine; by host glycan. The stretch at 633-667 forms a coiled coil; that stretch reads RQISNISSTIYEEIQKAQVQQEQNEKKLLELDEWA. Residues 662 to 683 form an MPER; binding to GalCer region; that stretch reads ELDEWASIWNWLDITKWLWYIK. Residues 685 to 705 form a helical membrane-spanning segment; that stretch reads AIIIVGALVGVRVIMIVLNIV. Over 706–863 the chain is Cytoplasmic; that stretch reads KNIRQGYQPL…IRQGLERSLL (158 aa). A YXXL motif; contains endocytosis signal motif is present at residues 712–715; that stretch reads YQPL. The Di-leucine internalization motif motif lies at 862–863; that stretch reads LL.

This sequence belongs to the HIV-1 env protein family. The mature envelope protein (Env) consists of a homotrimer of non-covalently associated gp120-gp41 heterodimers. The resulting complex protrudes from the virus surface as a spike. There seems to be as few as 10 spikes on the average virion. Interacts with host CD4, CCR5 and CXCR4. Gp120 also interacts with the C-type lectins CD209/DC-SIGN and CLEC4M/DC-SIGNR (collectively referred to as DC-SIGN(R)). Gp120 and gp41 interact with GalCer. Gp120 interacts with host ITGA4/ITGB7 complex; on CD4+ T-cells, this interaction results in rapid activation of integrin ITGAL/LFA-1, which facilitates efficient cell-to-cell spreading of HIV-1. Gp120 interacts with cell-associated heparan sulfate; this interaction increases virus infectivity on permissive cells and may be involved in infection of CD4- cells. In terms of assembly, the mature envelope protein (Env) consists of a homotrimer of non-covalently associated gp120-gp41 heterodimers. The resulting complex protrudes from the virus surface as a spike. There seems to be as few as 10 spikes on the average virion. Post-translationally, highly glycosylated by host. The high number of glycan on the protein is reffered to as 'glycan shield' because it contributes to hide protein sequence from adaptive immune system. In terms of processing, palmitoylation of the transmembrane protein and of Env polyprotein (prior to its proteolytic cleavage) is essential for their association with host cell membrane lipid rafts. Palmitoylation is therefore required for envelope trafficking to classical lipid rafts, but not for viral replication. Specific enzymatic cleavages in vivo yield mature proteins. Envelope glycoproteins are synthesized as an inactive precursor that is heavily N-glycosylated and processed likely by host cell furin in the Golgi to yield the mature SU and TM proteins. The cleavage site between SU and TM requires the minimal sequence [KR]-X-[KR]-R. About 2 of the 9 disulfide bonds of gp41 are reduced by P4HB/PDI, following binding to CD4 receptor.

The protein localises to the virion membrane. It is found in the host cell membrane. Its subcellular location is the host endosome membrane. In terms of biological role, oligomerizes in the host endoplasmic reticulum into predominantly trimers. In a second time, gp160 transits in the host Golgi, where glycosylation is completed. The precursor is then proteolytically cleaved in the trans-Golgi and thereby activated by cellular furin or furin-like proteases to produce gp120 and gp41. Its function is as follows. Attaches the virus to the host lymphoid cell by binding to the primary receptor CD4. This interaction induces a structural rearrangement creating a high affinity binding site for a chemokine coreceptor like CXCR4 and/or CCR5. Acts as a ligand for CD209/DC-SIGN and CLEC4M/DC-SIGNR, which are respectively found on dendritic cells (DCs), and on endothelial cells of liver sinusoids and lymph node sinuses. These interactions allow capture of viral particles at mucosal surfaces by these cells and subsequent transmission to permissive cells. HIV subverts the migration properties of dendritic cells to gain access to CD4+ T-cells in lymph nodes. Virus transmission to permissive T-cells occurs either in trans (without DCs infection, through viral capture and transmission), or in cis (following DCs productive infection, through the usual CD4-gp120 interaction), thereby inducing a robust infection. In trans infection, bound virions remain infectious over days and it is proposed that they are not degraded, but protected in non-lysosomal acidic organelles within the DCs close to the cell membrane thus contributing to the viral infectious potential during DCs' migration from the periphery to the lymphoid tissues. On arrival at lymphoid tissues, intact virions recycle back to DCs' cell surface allowing virus transmission to CD4+ T-cells. Functionally, acts as a class I viral fusion protein. Under the current model, the protein has at least 3 conformational states: pre-fusion native state, pre-hairpin intermediate state, and post-fusion hairpin state. During fusion of viral and target intracellular membranes, the coiled coil regions (heptad repeats) assume a trimer-of-hairpins structure, positioning the fusion peptide in close proximity to the C-terminal region of the ectodomain. The formation of this structure appears to drive apposition and subsequent fusion of viral and target cell membranes. Complete fusion occurs in host cell endosomes and is dynamin-dependent, however some lipid transfer might occur at the plasma membrane. The virus undergoes clathrin-dependent internalization long before endosomal fusion, thus minimizing the surface exposure of conserved viral epitopes during fusion and reducing the efficacy of inhibitors targeting these epitopes. Membranes fusion leads to delivery of the nucleocapsid into the cytoplasm. This is Envelope glycoprotein gp160 from Human immunodeficiency virus type 1 group O (isolate ANT70) (HIV-1).